Here is a 736-residue protein sequence, read N- to C-terminus: 1,4-alpha-glucan branching enzyme GlgB (736 aa).

Asp415 serves as the catalytic Nucleophile. Glu468 functions as the Proton donor in the catalytic mechanism.

The protein belongs to the glycosyl hydrolase 13 family. GlgB subfamily. As to quaternary structure, monomer.

It carries out the reaction Transfers a segment of a (1-&gt;4)-alpha-D-glucan chain to a primary hydroxy group in a similar glucan chain.. The protein operates within glycan biosynthesis; glycogen biosynthesis. Functionally, catalyzes the formation of the alpha-1,6-glucosidic linkages in glycogen by scission of a 1,4-alpha-linked oligosaccharide from growing alpha-1,4-glucan chains and the subsequent attachment of the oligosaccharide to the alpha-1,6 position. The chain is 1,4-alpha-glucan branching enzyme GlgB from Rhodopirellula baltica (strain DSM 10527 / NCIMB 13988 / SH1).